The following is a 331-amino-acid chain: Glyoxylate reductase (331 aa).

Residues 158 to 161, 180 to 182, and 239 to 241 contribute to the NADP(+) site; these read FGRI, SRT, and TSR. Active-site residues include arginine 241 and glutamate 270. Catalysis depends on histidine 288, which acts as the Proton donor. 288–290 is a binding site for NADP(+); it reads HIG.

The protein belongs to the D-isomer specific 2-hydroxyacid dehydrogenase family. GyaR subfamily. In terms of assembly, homodimer.

It localises to the cytoplasm. It catalyses the reaction glycolate + NAD(+) = glyoxylate + NADH + H(+). The polypeptide is Glyoxylate reductase (Thermococcus litoralis (strain ATCC 51850 / DSM 5473 / JCM 8560 / NS-C)).